The primary structure comprises 277 residues: MAKSGTKSLRILVTNDDGIHAPGLKVLEKIAHKLSRDVWVVAPEDEQSGSAHSLSLANPLRVRKLTARKYAVRGTPSDCVLMAVRHILKDEQPDLVVSGINRGQNIADDVTYSGTIAAAMEGTQLGIPSIALSQAFGFSGSANVKWSTAEHFAPDILKKLIAAGWPEEVLININFPDVVPGSVTGIEVTRQGKRDQSLVRVEERIDARNNPYYWLGFERILSNPPQGTDLRAIYESRISITPLHMDLTHQKTAKALNDALGTLAQPKRRPRSASRKK.

The a divalent metal cation site is built by Asp16, Asp17, Ser48, and Asn101.

The protein belongs to the SurE nucleotidase family. It depends on a divalent metal cation as a cofactor.

The protein resides in the cytoplasm. It carries out the reaction a ribonucleoside 5'-phosphate + H2O = a ribonucleoside + phosphate. Its function is as follows. Nucleotidase that shows phosphatase activity on nucleoside 5'-monophosphates. The sequence is that of 5'-nucleotidase SurE from Parvibaculum lavamentivorans (strain DS-1 / DSM 13023 / NCIMB 13966).